A 533-amino-acid polypeptide reads, in one-letter code: Peptidyl-prolyl cis-trans isomerase-like 2 (533 aa).

Residues 38–111 (KRLPFYCCSL…DEYFCPVTYK (74 aa)) form the U-box domain. One can recognise a PPIase cyclophilin-type domain in the interval 284–438 (KKSYARIITN…REIKIKQIQM (155 aa)). Positions 443 to 519 (FEEYQRRLKN…SNEGEELQKK (77 aa)) form a coiled coil. A compositionally biased stretch (basic and acidic residues) spans 454 to 477 (LTHEANAERENEEMRKRREKEEKM). Residues 454–533 (LTHEANAERE…KTTFGNFDNF (80 aa)) form a disordered region. Polar residues predominate over residues 523 to 533 (TKTTFGNFDNF).

Belongs to the cyclophilin-type PPIase family. PPIL2 subfamily.

It is found in the nucleus. It catalyses the reaction [protein]-peptidylproline (omega=180) = [protein]-peptidylproline (omega=0). The enzyme catalyses S-ubiquitinyl-[E2 ubiquitin-conjugating enzyme]-L-cysteine + [acceptor protein]-L-lysine = [E2 ubiquitin-conjugating enzyme]-L-cysteine + N(6)-ubiquitinyl-[acceptor protein]-L-lysine.. Its pathway is protein modification; protein ubiquitination. Its function is as follows. May catalyze the cis-trans isomerization of proline imidic peptide bonds in oligopeptides thereby assisting the folding of proteins. May also function as a chaperone, playing a role in intracellular transport of proteins. May also have a protein ubiquitin ligase activity acting as an E3 ubiquitin protein ligase or as a ubiquitin-ubiquitin ligase promoting elongation of ubiquitin chains on proteins. This chain is Peptidyl-prolyl cis-trans isomerase-like 2 (cyp14), found in Rhizopus delemar (strain RA 99-880 / ATCC MYA-4621 / FGSC 9543 / NRRL 43880) (Mucormycosis agent).